Reading from the N-terminus, the 578-residue chain is Proline--tRNA ligase (578 aa).

It belongs to the class-II aminoacyl-tRNA synthetase family. ProS type 1 subfamily. As to quaternary structure, homodimer.

It is found in the cytoplasm. It carries out the reaction tRNA(Pro) + L-proline + ATP = L-prolyl-tRNA(Pro) + AMP + diphosphate. Catalyzes the attachment of proline to tRNA(Pro) in a two-step reaction: proline is first activated by ATP to form Pro-AMP and then transferred to the acceptor end of tRNA(Pro). As ProRS can inadvertently accommodate and process non-cognate amino acids such as alanine and cysteine, to avoid such errors it has two additional distinct editing activities against alanine. One activity is designated as 'pretransfer' editing and involves the tRNA(Pro)-independent hydrolysis of activated Ala-AMP. The other activity is designated 'posttransfer' editing and involves deacylation of mischarged Ala-tRNA(Pro). The misacylated Cys-tRNA(Pro) is not edited by ProRS. This Burkholderia cenocepacia (strain HI2424) protein is Proline--tRNA ligase.